Here is a 399-residue protein sequence, read N- to C-terminus: Lipoyl synthase, mitochondrial (399 aa).

A mitochondrion-targeting transit peptide spans 1–14 (MALISRSCGAASRY). A compositionally biased stretch (low complexity) spans 39-52 (AASTSSSSSPSPST). The segment at 39-60 (AASTSSSSSPSPSTHNDRKKDL) is disordered. [4Fe-4S] cluster-binding residues include Cys128, Cys133, Cys139, Cys159, Cys163, Cys166, and Ser374. A Radical SAM core domain is found at 144 to 363 (EYATATATIM…EKVGQEMGFI (220 aa)).

The protein belongs to the radical SAM superfamily. Lipoyl synthase family. It depends on [4Fe-4S] cluster as a cofactor.

The protein resides in the mitochondrion. It carries out the reaction [[Fe-S] cluster scaffold protein carrying a second [4Fe-4S](2+) cluster] + N(6)-octanoyl-L-lysyl-[protein] + 2 oxidized [2Fe-2S]-[ferredoxin] + 2 S-adenosyl-L-methionine + 4 H(+) = [[Fe-S] cluster scaffold protein] + N(6)-[(R)-dihydrolipoyl]-L-lysyl-[protein] + 4 Fe(3+) + 2 hydrogen sulfide + 2 5'-deoxyadenosine + 2 L-methionine + 2 reduced [2Fe-2S]-[ferredoxin]. Its pathway is protein modification; protein lipoylation via endogenous pathway; protein N(6)-(lipoyl)lysine from octanoyl-[acyl-carrier-protein]: step 2/2. Its function is as follows. Catalyzes the radical-mediated insertion of two sulfur atoms into the C-6 and C-8 positions of the octanoyl moiety bound to the lipoyl domains of lipoate-dependent enzymes, thereby converting the octanoylated domains into lipoylated derivatives. The chain is Lipoyl synthase, mitochondrial (lias) from Danio rerio (Zebrafish).